Here is a 61-residue protein sequence, read N- to C-terminus: Photosystem II reaction center protein Z (61 aa).

A run of 2 helical transmembrane segments spans residues 8 to 28 (ALLVLVLYSLLLVVAVPVLFS) and 41 to 61 (LVGSLLWVLMVIGVGVLSFFK).

Belongs to the PsbZ family. In terms of assembly, PSII is composed of 1 copy each of membrane proteins PsbA, PsbB, PsbC, PsbD, PsbE, PsbF, PsbH, PsbI, PsbJ, PsbK, PsbL, PsbM, PsbT, PsbX, PsbY, PsbZ, Psb30/Ycf12, peripheral proteins PsbO, CyanoQ (PsbQ), PsbU, PsbV and a large number of cofactors. It forms dimeric complexes.

The protein resides in the cellular thylakoid membrane. Its function is as follows. May control the interaction of photosystem II (PSII) cores with the light-harvesting antenna, regulates electron flow through the 2 photosystem reaction centers. PSII is a light-driven water plastoquinone oxidoreductase, using light energy to abstract electrons from H(2)O, generating a proton gradient subsequently used for ATP formation. This chain is Photosystem II reaction center protein Z, found in Synechococcus sp. (strain JA-3-3Ab) (Cyanobacteria bacterium Yellowstone A-Prime).